The following is a 759-amino-acid chain: uncharacterized protein (759 aa).

Composition is skewed to low complexity over residues 1 to 36, 142 to 211, and 221 to 347; these read MSSN…NETN, QQQN…NQHH, and NHSN…GSSS. Disordered stretches follow at residues 1-47, 142-380, 409-428, 463-504, and 654-759; these read MSSN…AQTP, QQQN…PSIG, NNNC…GLGY, IING…NFEN, and LVDD…YLNK. The span at 348-360 shows a compositional bias: polar residues; the sequence is PFQDQARSPSSSF. Composition is skewed to low complexity over residues 463 to 495 and 660 to 747; these read IING…GNNN and HISN…DNNN.

This is an uncharacterized protein from Dictyostelium discoideum (Social amoeba).